Reading from the N-terminus, the 246-residue chain is Probable transcriptional regulatory protein GK2594 (246 aa).

Belongs to the TACO1 family.

It is found in the cytoplasm. This is Probable transcriptional regulatory protein GK2594 from Geobacillus kaustophilus (strain HTA426).